The chain runs to 451 residues: UDP-N-acetylmuramoylalanine--D-glutamate ligase (451 aa).

119–125 (GSNGKTT) serves as a coordination point for ATP.

It belongs to the MurCDEF family.

Its subcellular location is the cytoplasm. The enzyme catalyses UDP-N-acetyl-alpha-D-muramoyl-L-alanine + D-glutamate + ATP = UDP-N-acetyl-alpha-D-muramoyl-L-alanyl-D-glutamate + ADP + phosphate + H(+). Its pathway is cell wall biogenesis; peptidoglycan biosynthesis. In terms of biological role, cell wall formation. Catalyzes the addition of glutamate to the nucleotide precursor UDP-N-acetylmuramoyl-L-alanine (UMA). In Geobacillus kaustophilus (strain HTA426), this protein is UDP-N-acetylmuramoylalanine--D-glutamate ligase.